The following is a 543-amino-acid chain: T-complex protein 1 subunit eta (543 aa).

M1 is modified (N-acetylmethionine). Residue G41 participates in ADP binding. G41 is an ATP binding site. N6-acetyllysine is present on K67. A Mg(2+)-binding site is contributed by D92. Residues G93, T94, T95, S96, S164, and S165 each coordinate ADP. Residue G93 coordinates ATP. S96 serves as a coordination point for ATP. N6-acetyllysine is present on residues K250 and K320. Residues R398 and G409 each contribute to the ATP site. ADP is bound at residue G409. K430 participates in a covalent cross-link: Glycyl lysine isopeptide (Lys-Gly) (interchain with G-Cter in SUMO2). E494 and R499 together coordinate ADP. ATP is bound at residue R499. The disordered stretch occupies residues 524–543; it reads RSTVDASPAAGRGRGRGRLH. R535 carries the omega-N-methylarginine modification.

The protein belongs to the TCP-1 chaperonin family. In terms of assembly, component of the chaperonin-containing T-complex (TRiC), a hexadecamer composed of two identical back-to-back stacked rings enclosing a protein folding chamber. Each ring is made up of eight different subunits: TCP1/CCT1, CCT2, CCT3, CCT4, CCT5, CCT6A/CCT6, CCT7, CCT8. Interacts with PACRG. Interacts with DLEC1.

The protein localises to the cytoplasm. It catalyses the reaction ATP + H2O = ADP + phosphate + H(+). Its function is as follows. Component of the chaperonin-containing T-complex (TRiC), a molecular chaperone complex that assists the folding of actin, tubulin and other proteins upon ATP hydrolysis. The TRiC complex mediates the folding of WRAP53/TCAB1, thereby regulating telomere maintenance. The chain is T-complex protein 1 subunit eta (CCT7) from Bos taurus (Bovine).